Consider the following 428-residue polypeptide: D-amino acid dehydrogenase (428 aa).

3 to 17 (VVVLGSGVVGVTSAY) provides a ligand contact to FAD.

It belongs to the DadA oxidoreductase family. Requires FAD as cofactor.

It catalyses the reaction a D-alpha-amino acid + A + H2O = a 2-oxocarboxylate + AH2 + NH4(+). It functions in the pathway amino-acid degradation; D-alanine degradation; NH(3) and pyruvate from D-alanine: step 1/1. In terms of biological role, oxidative deamination of D-amino acids. In Paraburkholderia phymatum (strain DSM 17167 / CIP 108236 / LMG 21445 / STM815) (Burkholderia phymatum), this protein is D-amino acid dehydrogenase.